The sequence spans 84 residues: Polcalcin Nic t 1 (84 aa).

2 EF-hand domains span residues 6-40 (QDIA…MLGS) and 41-76 (VTSE…NRGL). The Ca(2+) site is built by Asp19, Asn21, Asp23, Lys25, Glu30, Asp54, Asp56, Asp58, and Glu65.

The chain is Polcalcin Nic t 1 (Nict1) from Nicotiana tabacum (Common tobacco).